Here is a 175-residue protein sequence, read N- to C-terminus: Nucleoside diphosphate kinase 6 (175 aa).

6 residues coordinate ATP: K15, F63, R91, T97, R111, and N121. Catalysis depends on H124, which acts as the Pros-phosphohistidine intermediate.

It belongs to the NDK family. Mg(2+) serves as cofactor.

It catalyses the reaction a 2'-deoxyribonucleoside 5'-diphosphate + ATP = a 2'-deoxyribonucleoside 5'-triphosphate + ADP. The catalysed reaction is a ribonucleoside 5'-diphosphate + ATP = a ribonucleoside 5'-triphosphate + ADP. Major role in the synthesis of nucleoside triphosphates other than ATP. The ATP gamma phosphate is transferred to the NDP beta phosphate via a ping-pong mechanism, using a phosphorylated active-site intermediate. The sequence is that of Nucleoside diphosphate kinase 6 (nme6) from Danio rerio (Zebrafish).